The chain runs to 467 residues: Interleukin-6 receptor subunit alpha (467 aa).

An N-terminal signal peptide occupies residues 1 to 19; it reads MLAVGCALLTALLAAPGMA. Residues 20–112 enclose the Ig-like C2-type domain; the sequence is LAPRGCSKLE…AGSVRLLVDA (93 aa). Residues 20-365 lie on the Extracellular side of the membrane; that stretch reads LAPRGCSKLE…VQDSASVPLP (346 aa). Disulfide bonds link Cys25–Cys193, Cys47–Cys96, Cys121–Cys132, and Cys165–Cys176. Asn55 and Asn93 each carry an N-linked (GlcNAc...) asparagine glycan. 2 Fibronectin type-III domains span residues 113–217 and 218–316; these read PPEE…LQPD and PPVN…IPWT. Residues Asn221 and Asn245 are each glycosylated (N-linked (GlcNAc...) asparagine). The WSXWS motif signature appears at 303 to 307; sequence WSEWS. Residues 315–357 are disordered; that stretch reads WTESRSSPAETELPLSTQAPTTNEDDEDISSKESANATSLPVQ. Polar residues-rich tracts occupy residues 317–336 and 346–357; these read ESRS…APTT and KESANATSLPVQ. N-linked (GlcNAc...) asparagine glycosylation is present at Asn350. The O-linked (GlcNAc) threonine glycan is linked to Thr352. Residues 366 to 386 form a helical membrane-spanning segment; it reads TFLVAGGSLAFGTLLCIGIIL. Residues 387-467 are Cytoplasmic-facing; sequence RFKKTGQLQA…VSNRDYFFPR (81 aa). A disordered region spans residues 428 to 467; it reads ISPPVSPNSLGDNTSRNSRPEARGPQSPYDVSNRDYFFPR.

It belongs to the type I cytokine receptor family. Type 3 subfamily. In terms of assembly, component of a hexamer of two molecules each of IL6, IL6R and IL6ST; first binds to IL6 to associate with the signaling subunit IL6ST. Interacts (via N-terminal ectodomain) with SORL1; this interaction may affect IL6-binding to IL6R, hence decrease IL6 'classic-signaling'. Also interacts with SORL1; this interaction leads to soluble IL6R internalization. May form a trimeric complex with the soluble SORL1 ectodomain and circulating IL6 receptor; this interaction might stabilize circulating IL6, hence promote IL6 'trans-signaling'. A short soluble form is also released from the membrane by proteolysis. The sIL6R is formed by limited proteolysis of membrane-bound receptors, a process referred to as ectodomain shedding. mIL6R is cleaved by the proteases ADAM10 and ADAM17. Post-translationally, glycosylated. Glycosylation is dispensable for transport, signaling, and cell-surface turnover. Glycosylation at Asn-55 is a protease-regulatory exosite. Glycosylation is required for ADAM17-mediated proteolysis. Expressed in liver.

It localises to the cell membrane. Its subcellular location is the secreted. Its activity is regulated as follows. Classic and trans-signaling are both inhibited by tocilizumab, a humanized monoclonal antibody that blocks interleukin IL6R signaling. In terms of biological role, part of the receptor for interleukin 6. Binds to IL6 with low affinity, but does not transduce a signal. Signal activation necessitate an association with IL6ST. Activation leads to the regulation of the immune response, acute-phase reactions and hematopoiesis. The interaction with membrane-bound IL6R and IL6ST stimulates 'classic signaling', the restricted expression of the IL6R limits classic IL6 signaling to only a few tissues such as the liver and some cells of the immune system. Whereas the binding of IL6 and soluble IL6R to IL6ST stimulates 'trans-signaling'. Alternatively, 'cluster signaling' occurs when membrane-bound IL6:IL6R complexes on transmitter cells activate IL6ST receptors on neighboring receiver cells. Signaling via the membrane-bound IL6R is mostly regenerative and anti-inflammatory. Drives naive CD4(+) T cells to the Th17 lineage, through 'cluster signaling' by dendritic cells. Its function is as follows. Soluble form of IL6 receptor (sIL6R) that acts as an agonist of IL6 activity. The IL6:sIL6R complex (hyper-IL6) binds to IL6ST/gp130 on cell surfaces and induces signaling also on cells that do not express membrane-bound IL6R in a process called IL6 'trans-signaling'. sIL6R is causative for the pro-inflammatory properties of IL6 and an important player in the development of chronic inflammatory diseases. In complex with IL6, is required for induction of VEGF production. Plays a protective role during liver injury, being required for maintenance of tissue regeneration. 'Trans-signaling' in central nervous system regulates energy and glucose homeostasis. The sequence is that of Interleukin-6 receptor subunit alpha (IL6R) from Sus scrofa (Pig).